The chain runs to 183 residues: Adenine phosphoribosyltransferase (183 aa).

The protein belongs to the purine/pyrimidine phosphoribosyltransferase family. In terms of assembly, homodimer.

It localises to the cytoplasm. It carries out the reaction AMP + diphosphate = 5-phospho-alpha-D-ribose 1-diphosphate + adenine. The protein operates within purine metabolism; AMP biosynthesis via salvage pathway; AMP from adenine: step 1/1. Catalyzes a salvage reaction resulting in the formation of AMP, that is energically less costly than de novo synthesis. In Shewanella sp. (strain MR-7), this protein is Adenine phosphoribosyltransferase.